A 711-amino-acid chain; its full sequence is Far upstream element-binding protein 2 (711 aa).

The interval Met1–Glu147 is disordered. Position 2 is an N-acetylserine (Ser2). Pro residues predominate over residues Gly8–Ala17. Composition is skewed to gly residues over residues Gly18–Gly28 and Gly36–Gly68. Arg40 carries the omega-N-methylarginine modification. Lys87 bears the N6-acetyllysine mark. Ser99 bears the Phosphoserine mark. A Phosphothreonine modification is found at Thr100. The segment covering Arg110 to Lys122 has biased composition (basic and acidic residues). A Glycyl lysine isopeptide (Lys-Gly) (interchain with G-Cter in SUMO1); alternate cross-link involves residue Lys121. Lys121 participates in a covalent cross-link: Glycyl lysine isopeptide (Lys-Gly) (interchain with G-Cter in SUMO2); alternate. Residues Ser125, Ser129, Ser131, Ser181, Ser184, Ser193, and Ser274 each carry the phosphoserine modification. 3 KH domains span residues Ser144–Leu208, Gly233–Val299, and Gly322–Ile386. The tract at residues Ser392–Phe429 is disordered. The segment covering Pro397–Pro407 has biased composition (pro residues). Over residues Pro408–Gly424 the composition is skewed to gly residues. Omega-N-methylarginine is present on residues Arg411, Arg413, Arg415, and Arg442. The KH 4 domain occupies Gly424–Ile491. Ser480 is subject to Phosphoserine. A disordered region spans residues Gly497 to Ala569. Composition is skewed to pro residues over residues Pro501 to Pro520 and Pro528 to Tyr542. The stretch at Asp571–His582 is repeat 1. Positions Asp571–Gln684 are 4 X 12 AA imperfect repeats. The interval Tyr583–Gln711 is disordered. Over residues Pro587–Thr613 the composition is skewed to pro residues. Repeat copies occupy residues Asp617–Lys628, Asp643–Lys654, and Asp673–Gln684.

It belongs to the KHSRP family. As to quaternary structure, part of a ternary complex containing FUBP2, PTBP1, PTBP2 and HNRPH1. Interacts with PARN. Interacts with PQBP1. Phosphorylation at Ser-193 leads to the unfolding of the unstable KH domain 1, creating a site for 14-3-3 YWHAZ binding, which promotes nuclear localization and impairs the RNA degradation function. Detected in neural and non-neural cell lines.

The protein localises to the nucleus. The protein resides in the cytoplasm. In terms of biological role, binds to the dendritic targeting element and may play a role in mRNA trafficking. Part of a ternary complex that binds to the downstream control sequence (DCS) of the pre-mRNA. Mediates exon inclusion in transcripts that are subject to tissue-specific alternative splicing. May interact with single-stranded DNA from the far-upstream element (FUSE). May activate gene expression. Also involved in degradation of inherently unstable mRNAs that contain AU-rich elements (AREs) in their 3'-UTR, possibly by recruiting degradation machinery to ARE-containing mRNAs. This is Far upstream element-binding protein 2 (KHSRP) from Homo sapiens (Human).